Consider the following 232-residue polypeptide: Modulator of macroautophagy TMEM150B (232 aa).

Residues 1-6 (MWAWAL) are Cytoplasmic-facing. Residues 7 to 27 (LPVFLAVFGTVGLWAVYAIAV) traverse the membrane as a helical segment. At 28–50 (SNNSVNITIEFPYISTCGAYTPQ) the chain is on the extracellular side. N-linked (GlcNAc...) asparagine glycosylation is found at Asn29 and Asn33. A helical membrane pass occupies residues 51–71 (SCLFAQICNICCVLALWIVVI). Topologically, residues 72-83 (RFQQIRDLGRSS) are cytoplasmic. The helical transmembrane segment at 84–104 (HLNTAGLVLGFISSIGISILG) threads the bilayer. The Extracellular portion of the chain corresponds to 105–115 (NFQQTIIQEVH). The helical transmembrane segment at 116 to 136 (LLGALMAFFLGLAYFWIQAFI) threads the bilayer. Residues 137–153 (TYFSPPSRDNKWLVPVR) lie on the Cytoplasmic side of the membrane. A helical transmembrane segment spans residues 154 to 174 (FVLCSQCTCMVICMFVLHSTG). Over 175 to 177 (FRS) the chain is Extracellular. Residues 178 to 198 (AAAICEWILVMCFFALFGVFA) form a helical membrane-spanning segment. Residues 199 to 232 (AEFRHIDFHKLTVQKEGLKVANNDNVVWTVQDVQ) lie on the Cytoplasmic side of the membrane.

Belongs to the DRAM/TMEM150 family.

Its subcellular location is the cell membrane. The protein resides in the endosome membrane. It localises to the cytoplasmic vesicle. It is found in the autophagosome membrane. Functionally, modulator of macroautophagy that causes accumulation of autophagosomes under basal conditions and enhances autophagic flux. Represses cell death and promotes long-term clonogenic survival of cells grown in the absence of glucose in a macroautophagy-independent manner. May have some role in extracellular matrix engulfment or growth factor receptor recycling, both of which can modulate cell survival. This is Modulator of macroautophagy TMEM150B from Danio rerio (Zebrafish).